Reading from the N-terminus, the 109-residue chain is Cell division protein ZapA (109 aa).

Residues 21–97 (PEQQEALNQA…QTIEQALVEQ (77 aa)) are a coiled coil.

Belongs to the ZapA family. Type 1 subfamily. As to quaternary structure, homodimer. Interacts with FtsZ.

The protein localises to the cytoplasm. Functionally, activator of cell division through the inhibition of FtsZ GTPase activity, therefore promoting FtsZ assembly into bundles of protofilaments necessary for the formation of the division Z ring. It is recruited early at mid-cell but it is not essential for cell division. This is Cell division protein ZapA from Sodalis glossinidius (strain morsitans).